A 609-amino-acid polypeptide reads, in one-letter code: Aminopeptidase ltah-1.1 (609 aa).

Substrate-binding positions include 137–139 (QCQ) and 268–273 (PFGGME). Residue histidine 297 participates in Zn(2+) binding. Glutamate 298 functions as the Proton acceptor in the catalytic mechanism. Zn(2+)-binding residues include histidine 301 and glutamate 320. Tyrosine 387 (proton donor) is an active-site residue. 564–566 (RMK) serves as a coordination point for substrate.

The protein belongs to the peptidase M1 family. Zn(2+) is required as a cofactor.

It localises to the cytoplasm. It catalyses the reaction Release of N-terminal Arg and Lys from oligopeptides when P1' is not Pro. Also acts on arylamides of Arg and Lys.. Its function is as follows. Aminopeptidase which preferentially removes N-terminal Arg and Lys residues from peptides and proteins. The polypeptide is Aminopeptidase ltah-1.1 (Caenorhabditis elegans).